The primary structure comprises 734 residues: Phosphoribosylformylglycinamidine synthase subunit PurL (734 aa).

The active site involves His-49. Residues Tyr-52 and Lys-91 each contribute to the ATP site. Position 93 (Glu-93) interacts with Mg(2+). Substrate is bound by residues 94-97 and Arg-116; that span reads SHNH. His-95 serves as the catalytic Proton acceptor. Asp-117 is a binding site for Mg(2+). Gln-240 is a binding site for substrate. Asp-268 contacts Mg(2+). 312–314 serves as a coordination point for substrate; the sequence is ESQ. Positions 491 and 528 each coordinate ATP. Mg(2+) is bound at residue Asn-529. A substrate-binding site is contributed by Ser-531.

The protein belongs to the FGAMS family. Monomer. Part of the FGAM synthase complex composed of 1 PurL, 1 PurQ and 2 PurS subunits.

It localises to the cytoplasm. It catalyses the reaction N(2)-formyl-N(1)-(5-phospho-beta-D-ribosyl)glycinamide + L-glutamine + ATP + H2O = 2-formamido-N(1)-(5-O-phospho-beta-D-ribosyl)acetamidine + L-glutamate + ADP + phosphate + H(+). It functions in the pathway purine metabolism; IMP biosynthesis via de novo pathway; 5-amino-1-(5-phospho-D-ribosyl)imidazole from N(2)-formyl-N(1)-(5-phospho-D-ribosyl)glycinamide: step 1/2. Functionally, part of the phosphoribosylformylglycinamidine synthase complex involved in the purines biosynthetic pathway. Catalyzes the ATP-dependent conversion of formylglycinamide ribonucleotide (FGAR) and glutamine to yield formylglycinamidine ribonucleotide (FGAM) and glutamate. The FGAM synthase complex is composed of three subunits. PurQ produces an ammonia molecule by converting glutamine to glutamate. PurL transfers the ammonia molecule to FGAR to form FGAM in an ATP-dependent manner. PurS interacts with PurQ and PurL and is thought to assist in the transfer of the ammonia molecule from PurQ to PurL. This chain is Phosphoribosylformylglycinamidine synthase subunit PurL, found in Zymomonas mobilis subsp. mobilis (strain ATCC 31821 / ZM4 / CP4).